The chain runs to 64 residues: Large ribosomal subunit protein bL35 (64 aa).

It belongs to the bacterial ribosomal protein bL35 family.

This chain is Large ribosomal subunit protein bL35, found in Leifsonia xyli subsp. xyli (strain CTCB07).